Reading from the N-terminus, the 308-residue chain is Tetraacyldisaccharide 4'-kinase (308 aa).

Residue Ser63–Thr70 participates in ATP binding.

Belongs to the LpxK family.

It carries out the reaction a lipid A disaccharide + ATP = a lipid IVA + ADP + H(+). It participates in glycolipid biosynthesis; lipid IV(A) biosynthesis; lipid IV(A) from (3R)-3-hydroxytetradecanoyl-[acyl-carrier-protein] and UDP-N-acetyl-alpha-D-glucosamine: step 6/6. In terms of biological role, transfers the gamma-phosphate of ATP to the 4'-position of a tetraacyldisaccharide 1-phosphate intermediate (termed DS-1-P) to form tetraacyldisaccharide 1,4'-bis-phosphate (lipid IVA). In Campylobacter jejuni subsp. jejuni serotype O:23/36 (strain 81-176), this protein is Tetraacyldisaccharide 4'-kinase.